The chain runs to 290 residues: 4-hydroxy-tetrahydrodipicolinate synthase (290 aa).

A pyruvate-binding site is contributed by Thr-44. The active-site Proton donor/acceptor is Tyr-132. The active-site Schiff-base intermediate with substrate is Lys-160. Ile-202 serves as a coordination point for pyruvate.

The protein belongs to the DapA family. As to quaternary structure, homotetramer; dimer of dimers.

The protein resides in the cytoplasm. The catalysed reaction is L-aspartate 4-semialdehyde + pyruvate = (2S,4S)-4-hydroxy-2,3,4,5-tetrahydrodipicolinate + H2O + H(+). It participates in amino-acid biosynthesis; L-lysine biosynthesis via DAP pathway; (S)-tetrahydrodipicolinate from L-aspartate: step 3/4. Its function is as follows. Catalyzes the condensation of (S)-aspartate-beta-semialdehyde [(S)-ASA] and pyruvate to 4-hydroxy-tetrahydrodipicolinate (HTPA). This Legionella pneumophila (strain Corby) protein is 4-hydroxy-tetrahydrodipicolinate synthase.